A 154-amino-acid chain; its full sequence is Large ribosomal subunit protein uL16 (154 aa).

Belongs to the universal ribosomal protein uL16 family. Part of the 50S ribosomal subunit.

Binds 23S rRNA and is also seen to make contacts with the A and possibly P site tRNAs. The protein is Large ribosomal subunit protein uL16 of Synechococcus sp. (strain RCC307).